The chain runs to 478 residues: Serine hydroxymethyltransferase (478 aa).

Residues Leu-161 and 165–167 (GHL) each bind (6S)-5,6,7,8-tetrahydrofolate. The residue at position 273 (Lys-273) is an N6-(pyridoxal phosphate)lysine. (6S)-5,6,7,8-tetrahydrofolate is bound at residue Glu-291.

Belongs to the SHMT family. As to quaternary structure, homodimer. Pyridoxal 5'-phosphate serves as cofactor.

Its subcellular location is the cytoplasm. The enzyme catalyses (6R)-5,10-methylene-5,6,7,8-tetrahydrofolate + glycine + H2O = (6S)-5,6,7,8-tetrahydrofolate + L-serine. It functions in the pathway one-carbon metabolism; tetrahydrofolate interconversion. The protein operates within amino-acid biosynthesis; glycine biosynthesis; glycine from L-serine: step 1/1. Catalyzes the reversible interconversion of serine and glycine with tetrahydrofolate (THF) serving as the one-carbon carrier. This reaction serves as the major source of one-carbon groups required for the biosynthesis of purines, thymidylate, methionine, and other important biomolecules. Also exhibits THF-independent aldolase activity toward beta-hydroxyamino acids, producing glycine and aldehydes, via a retro-aldol mechanism. The polypeptide is Serine hydroxymethyltransferase (Salinispora tropica (strain ATCC BAA-916 / DSM 44818 / JCM 13857 / NBRC 105044 / CNB-440)).